The chain runs to 323 residues: Beta-ketoacyl-[acyl-carrier-protein] synthase III (323 aa).

Catalysis depends on residues Cys114 and His250. The segment at Gln251–Arg255 is ACP-binding. Asn280 is a catalytic residue.

It belongs to the thiolase-like superfamily. FabH family. Homodimer.

It localises to the cytoplasm. The enzyme catalyses malonyl-[ACP] + acetyl-CoA + H(+) = 3-oxobutanoyl-[ACP] + CO2 + CoA. The protein operates within lipid metabolism; fatty acid biosynthesis. Functionally, catalyzes the condensation reaction of fatty acid synthesis by the addition to an acyl acceptor of two carbons from malonyl-ACP. Catalyzes the first condensation reaction which initiates fatty acid synthesis and may therefore play a role in governing the total rate of fatty acid production. Possesses both acetoacetyl-ACP synthase and acetyl transacylase activities. Its substrate specificity determines the biosynthesis of branched-chain and/or straight-chain of fatty acids. The sequence is that of Beta-ketoacyl-[acyl-carrier-protein] synthase III from Alkalilimnicola ehrlichii (strain ATCC BAA-1101 / DSM 17681 / MLHE-1).